A 556-amino-acid polypeptide reads, in one-letter code: Arginine--tRNA ligase (556 aa).

A 'HIGH' region motif is present at residues 132–142; sequence ANPTGDLHLGH.

This sequence belongs to the class-I aminoacyl-tRNA synthetase family. In terms of assembly, monomer.

Its subcellular location is the cytoplasm. The enzyme catalyses tRNA(Arg) + L-arginine + ATP = L-arginyl-tRNA(Arg) + AMP + diphosphate. In Listeria monocytogenes serotype 4b (strain CLIP80459), this protein is Arginine--tRNA ligase.